We begin with the raw amino-acid sequence, 186 residues long: MFRGIVQGRGVIRSISKSEDSQRHGIAFPEGMFQLVDVDTVMLVNGCSLTVVRILGDMVYFDIDQALGTTTFDGLKEGDQVNLEIHPKFGEVVGRGGLTGNIKGTALVAAIEENDAGFSVLIDIPKGLAENLTVKDDIGIDGISLPITDMSDSIITLNYSRDLLASTNIASLAKDVKVNVEILNEW.

Lumazine-binding repeat units follow at residues 1-96 (MFRG…VGRG) and 97-186 (GLTG…LNEW).

6,7-dimethyl-8-(1-D-ribityl)lumazine serves as cofactor.

Its function is as follows. Antenna protein that modulates the color of the bioluminescence emission of the luciferase. In the presence of LumP, luciferase emission is shifted to higher energy values (shorter wavelength). This is Lumazine protein (lumP) from Photobacterium leiognathi.